A 136-amino-acid chain; its full sequence is Ribosome-binding factor A (136 aa).

This sequence belongs to the RbfA family. Monomer. Binds 30S ribosomal subunits, but not 50S ribosomal subunits or 70S ribosomes.

The protein localises to the cytoplasm. One of several proteins that assist in the late maturation steps of the functional core of the 30S ribosomal subunit. Associates with free 30S ribosomal subunits (but not with 30S subunits that are part of 70S ribosomes or polysomes). Required for efficient processing of 16S rRNA. May interact with the 5'-terminal helix region of 16S rRNA. The polypeptide is Ribosome-binding factor A (Rhizobium etli (strain ATCC 51251 / DSM 11541 / JCM 21823 / NBRC 15573 / CFN 42)).